A 349-amino-acid chain; its full sequence is Palmitoyltransferase PFA5 (349 aa).

The next 2 membrane-spanning stretches (helical) occupy residues 19–39 and 57–77; these read LIPF…CHQF and LIIV…LMLV. The DHHC domain maps to 126 to 176; the sequence is IWCSNCQSLKMSRTHHSTKVGYCVPRFDHYCVWIGTVLGRLNYKLFVQFTF. Cys-156 (S-palmitoyl cysteine intermediate) is an active-site residue. A run of 2 helical transmembrane segments spans residues 170 to 190 and 204 to 224; these read LFVQ…ISIA and VYAV…LFLT.

The protein belongs to the DHHC palmitoyltransferase family. PFA5 subfamily.

It localises to the membrane. It catalyses the reaction L-cysteinyl-[protein] + hexadecanoyl-CoA = S-hexadecanoyl-L-cysteinyl-[protein] + CoA. This is Palmitoyltransferase PFA5 (PFA5) from Kluyveromyces lactis (strain ATCC 8585 / CBS 2359 / DSM 70799 / NBRC 1267 / NRRL Y-1140 / WM37) (Yeast).